A 136-amino-acid polypeptide reads, in one-letter code: Small ribosomal subunit protein uS8c (136 aa).

Belongs to the universal ribosomal protein uS8 family. Part of the 30S ribosomal subunit.

Its subcellular location is the plastid. One of the primary rRNA binding proteins, it binds directly to 16S rRNA central domain where it helps coordinate assembly of the platform of the 30S subunit. The protein is Small ribosomal subunit protein uS8c (rps8) of Helicosporidium sp. subsp. Simulium jonesii (Green alga).